Reading from the N-terminus, the 191-residue chain is Transcription factor FapR (191 aa).

It belongs to the FapR family.

Transcriptional factor involved in regulation of membrane lipid biosynthesis by repressing genes involved in fatty acid and phospholipid metabolism. The chain is Transcription factor FapR from Oceanobacillus iheyensis (strain DSM 14371 / CIP 107618 / JCM 11309 / KCTC 3954 / HTE831).